The chain runs to 54 residues: AYVINDSCIACGACKPECPVNIQQGSIYAIDADSCIDCGSCASVCPVGAPNPED.

2 consecutive 4Fe-4S ferredoxin-type domains span residues 2-25 and 26-54; these read YVINDSCIACGACKPECPVNIQQG and SIYAIDADSCIDCGSCASVCPVGAPNPED. Positions 8, 11, 14, 18, 35, 38, 41, and 45 each coordinate [4Fe-4S] cluster.

The cofactor is [4Fe-4S] cluster.

Ferredoxins are iron-sulfur proteins that transfer electrons in a wide variety of metabolic reactions. The chain is Ferredoxin from Peptoniphilus asaccharolyticus (Peptostreptococcus asaccharolyticus).